We begin with the raw amino-acid sequence, 277 residues long: MSKALANMPGDDYFRHPPVFDTYAEHRAYLKFRHAVALRHFARLGFDQDGLAGLITVADPEHADTYWANPLAHPFSTITPADLIRVDGDSTETVDGQRRVNIAAFNIHAEIHRARPDVQAVIHLHTVYGRAFSAFARKLPPLTQDACPFFEDHEVFDDYTGLVLAKDDGRRIAKQLRGHKAILLKNHGLVTVGETLDAAAWWFTLLDTCCHVQLLADAAGGAEPIPAEVARLTGQQLGSHLLGWNSYQPLHEATLARNPDLAAMAPALPPQTPALAR.

The protein belongs to the aldolase class II family. Homotetramer. It depends on Fe(2+) as a cofactor.

The catalysed reaction is 3-dimethylallyl-4-hydroxyphenylpyruvate + O2 = 3-dimethylallyl-4-hydroxymandelate + CO2. It carries out the reaction 3-dimethylallyl-4-hydroxymandelate + O2 = 3-dimethylallyl-4-hydroxybenzoate + CO2 + H2O. It participates in antibiotic biosynthesis. Activated by ascorbate. In terms of biological role, involved in the biosynthesis of ring A of the aminocoumarin antibiotic clorobiocin. Catalyzes two consecutive oxidative decarboxylations of 3-dimethylallyl-4-hydroxyphenylpyruvate (3DMA-4HPP) to yield 3-dimethylallyl-4-hydroxybenzoate (3DMA-4HB) via the 3-dimethylallyl-4-hydroxymandelic acid (3DMA-4HMA) intermediate. The protein is 4-hydroxy-3-prenylphenylpyruvate oxygenase/4-hydroxy-3-prenylbenzoate synthase of Streptomyces roseochromogenus subsp. oscitans.